We begin with the raw amino-acid sequence, 219 residues long: ATP-dependent Clp protease proteolytic subunit 1 (219 aa).

Serine 113 serves as the catalytic Nucleophile. Histidine 138 is an active-site residue.

Belongs to the peptidase S14 family. As to quaternary structure, fourteen ClpP subunits assemble into 2 heptameric rings which stack back to back to give a disk-like structure with a central cavity, resembling the structure of eukaryotic proteasomes.

The protein localises to the cytoplasm. It catalyses the reaction Hydrolysis of proteins to small peptides in the presence of ATP and magnesium. alpha-casein is the usual test substrate. In the absence of ATP, only oligopeptides shorter than five residues are hydrolyzed (such as succinyl-Leu-Tyr-|-NHMec, and Leu-Tyr-Leu-|-Tyr-Trp, in which cleavage of the -Tyr-|-Leu- and -Tyr-|-Trp bonds also occurs).. Its function is as follows. Cleaves peptides in various proteins in a process that requires ATP hydrolysis. Has a chymotrypsin-like activity. Plays a major role in the degradation of misfolded proteins. Probably partially responsible for degradation of ECF sigma factor SigR prime. This is ATP-dependent Clp protease proteolytic subunit 1 from Streptomyces coelicolor (strain ATCC BAA-471 / A3(2) / M145).